Consider the following 166-residue polypeptide: Small ribosomal subunit protein uS5 (166 aa).

Residues 11–74 (LREKLVAINR…EKARANMKRV (64 aa)) enclose the S5 DRBM domain.

This sequence belongs to the universal ribosomal protein uS5 family. As to quaternary structure, part of the 30S ribosomal subunit. Contacts proteins S4 and S8.

With S4 and S12 plays an important role in translational accuracy. Functionally, located at the back of the 30S subunit body where it stabilizes the conformation of the head with respect to the body. This chain is Small ribosomal subunit protein uS5, found in Alkalilimnicola ehrlichii (strain ATCC BAA-1101 / DSM 17681 / MLHE-1).